The primary structure comprises 151 residues: Transcriptional repressor NrdR (151 aa).

A zinc finger spans residues 3 to 34 (CPYCAYGESKVVDSRSTEDGSSIRRRRECLKC). One can recognise an ATP-cone domain in the interval 49 to 139 (ILVIKKNMSR…VYRQFKDINT (91 aa)).

It belongs to the NrdR family. Zn(2+) serves as cofactor.

Its function is as follows. Negatively regulates transcription of bacterial ribonucleotide reductase nrd genes and operons by binding to NrdR-boxes. The chain is Transcriptional repressor NrdR from Clostridium botulinum (strain Loch Maree / Type A3).